The chain runs to 351 residues: UDP-3-O-acylglucosamine N-acyltransferase (351 aa).

The active-site Proton acceptor is the His-240.

The protein belongs to the transferase hexapeptide repeat family. LpxD subfamily. Homotrimer.

The enzyme catalyses a UDP-3-O-[(3R)-3-hydroxyacyl]-alpha-D-glucosamine + a (3R)-hydroxyacyl-[ACP] = a UDP-2-N,3-O-bis[(3R)-3-hydroxyacyl]-alpha-D-glucosamine + holo-[ACP] + H(+). It functions in the pathway bacterial outer membrane biogenesis; LPS lipid A biosynthesis. Catalyzes the N-acylation of UDP-3-O-acylglucosamine using 3-hydroxyacyl-ACP as the acyl donor. Is involved in the biosynthesis of lipid A, a phosphorylated glycolipid that anchors the lipopolysaccharide to the outer membrane of the cell. In Pseudomonas putida (strain ATCC 700007 / DSM 6899 / JCM 31910 / BCRC 17059 / LMG 24140 / F1), this protein is UDP-3-O-acylglucosamine N-acyltransferase.